The sequence spans 292 residues: Putative ribonuclease 3 (292 aa).

Residues 32 to 158 (LGMSDEYIPY…FFGATEWLID (127 aa)) form the RNase III domain. The DRBM domain maps to 204-276 (DAKTRFNEVI…ASRALETLAL (73 aa)).

Belongs to the IIV-6 142R family.

It catalyses the reaction Endonucleolytic cleavage to 5'-phosphomonoester.. Digests double-stranded RNA. The protein is Putative ribonuclease 3 of Acheta domesticus (House cricket).